We begin with the raw amino-acid sequence, 445 residues long: Phosphoglucosamine mutase (445 aa).

Residue serine 102 is the Phosphoserine intermediate of the active site. Mg(2+)-binding residues include serine 102, aspartate 241, aspartate 243, and aspartate 245. Serine 102 carries the phosphoserine modification.

Belongs to the phosphohexose mutase family. Mg(2+) serves as cofactor. In terms of processing, activated by phosphorylation.

The enzyme catalyses alpha-D-glucosamine 1-phosphate = D-glucosamine 6-phosphate. Its function is as follows. Catalyzes the conversion of glucosamine-6-phosphate to glucosamine-1-phosphate. The sequence is that of Phosphoglucosamine mutase from Haemophilus influenzae (strain 86-028NP).